The sequence spans 379 residues: Carbamoyl phosphate synthase small chain (379 aa).

The tract at residues 1 to 189 (MSKSALLVLE…GLPEAKDDSE (189 aa)) is CPSase. Residues Ser47, Gly241, and Gly243 each coordinate L-glutamine. In terms of domain architecture, Glutamine amidotransferase type-1 spans 193-379 (HVVAYDFGAK…FIELIKQHSA (187 aa)). Cys269 (nucleophile) is an active-site residue. 5 residues coordinate L-glutamine: Leu270, Gln273, Asn311, Gly313, and Phe314. Residues His353 and Glu355 contribute to the active site.

It belongs to the CarA family. Composed of two chains; the small (or glutamine) chain promotes the hydrolysis of glutamine to ammonia, which is used by the large (or ammonia) chain to synthesize carbamoyl phosphate. Tetramer of heterodimers (alpha,beta)4.

It catalyses the reaction hydrogencarbonate + L-glutamine + 2 ATP + H2O = carbamoyl phosphate + L-glutamate + 2 ADP + phosphate + 2 H(+). The catalysed reaction is L-glutamine + H2O = L-glutamate + NH4(+). The protein operates within amino-acid biosynthesis; L-arginine biosynthesis; carbamoyl phosphate from bicarbonate: step 1/1. It functions in the pathway pyrimidine metabolism; UMP biosynthesis via de novo pathway; (S)-dihydroorotate from bicarbonate: step 1/3. Its function is as follows. Small subunit of the glutamine-dependent carbamoyl phosphate synthetase (CPSase). CPSase catalyzes the formation of carbamoyl phosphate from the ammonia moiety of glutamine, carbonate, and phosphate donated by ATP, constituting the first step of 2 biosynthetic pathways, one leading to arginine and/or urea and the other to pyrimidine nucleotides. The small subunit (glutamine amidotransferase) binds and cleaves glutamine to supply the large subunit with the substrate ammonia. This Vibrio vulnificus (strain YJ016) protein is Carbamoyl phosphate synthase small chain.